A 122-amino-acid chain; its full sequence is uncharacterized protein (122 aa).

This is an uncharacterized protein from Escherichia coli (strain K12).